The following is a 556-amino-acid chain: 2-methylpropanoate--CoA ligase CCL4 (556 aa).

Residues 192–200, 325–330, D423, 435–438, and K531 contribute to the ATP site; these read TSGTTSSPK, HGYGLT, and IKDR. Positions 260 to 325 are SBD1; it reads DSEIIYDMIK…TESLGFAVSH (66 aa). Residues 326–402 form an SBD2 region; sequence GYGLTETAGL…LRGGSVMLGY (77 aa).

It belongs to the ATP-dependent AMP-binding enzyme family. In terms of tissue distribution, mostly expressed in old leaves and in cones and glandular trichomes (lupulin glands) after flowering, and, to a lower extent, in stems, young leaves and flowers.

The protein resides in the cytoplasm. It is found in the cytosol. It catalyses the reaction 2-methylpropanoate + ATP + CoA = 2-methylpropanoyl-CoA + AMP + diphosphate. The enzyme catalyses propanoate + ATP + CoA = propanoyl-CoA + AMP + diphosphate. The catalysed reaction is butanoate + ATP + CoA = butanoyl-CoA + AMP + diphosphate. It carries out the reaction 2-methylbutanoate + ATP + CoA = 2-methylbutanoyl-CoA + AMP + diphosphate. The protein operates within secondary metabolite biosynthesis. Functionally, involved in the biosynthesis of prenylated phenolics natural products which contribute to the bitter taste of beer and display broad biological activities. Catalyzes the ligation of CoA on 2-methylpropanoate (isobutyric acid) and 2-methylbutanoate to produce 2-methylpropanoyl-CoA and 2-methylbutanoyl-CoA, respectively. Can also use propanoate and butanoate as substrates with a lower efficiency. The polypeptide is 2-methylpropanoate--CoA ligase CCL4 (Humulus lupulus (European hop)).